The chain runs to 133 residues: Late embryogenesis abundant protein B19.3 (133 aa).

Residues 1-133 (MASGQQERSE…IDESKFKTKS (133 aa)) are disordered. Basic and acidic residues-rich tracts occupy residues 7-19 (ERSE…REGE), 32-102 (EAQE…EMGR), and 113-133 (GGER…KTKS). Repeat copies occupy residues 24–43 (GGTG…GRSR), 44–63 (GGQT…MGHK), and 64–83 (GGET…MGHK). The segment at 24-83 (GGTGGKTLEAQEHLAEGRSRGGQTRKDQLGEEGYREMGHKGGETRKEQLGEEGYREMGHK) is 3 X 20 AA tandem repeats.

It belongs to the small hydrophilic plant seed protein family.

Lea proteins are late embryonic proteins abundant in higher plant seed embryos. This Hordeum vulgare (Barley) protein is Late embryogenesis abundant protein B19.3 (B19.3).